The following is a 681-amino-acid chain: METMQSRTYAGLTKLNTTTALLNKKDGNDDDKAEHSKRSGYHGLSPLDALALKHRDLNRKLNLRAMMSKSEDNLQILKETTSGSSSDLLNIESPASPAEASSPFTVRTPTVHDPEHYFVAQKLSSVFGTPDLEDETDFFDYFSAAPDVHPNDIFDSYNSNNIAESFDDDNYYNSLLPPNAPYYHEIEPPRTASNTSPTPNSIKSAHPAEPPKRPAFTRSATSPDKILPTRIKSKDTVSSGDSTPLSGSSSSKGMLMSMSTSENHSLSSNPELSNSNLLAKNESPADVSNNESGNESSKEPDKEHSTPIHPTTPVSRCARPSSRQQTISILQAQSPFLKKSDKERANLNKTMVSINKSINIHQSIHEISCPHHSSSDNCLFILISLMDRLHSPVLKQLDVSLQSLTMTAIRYIDLNYVDVQYTNLRGGAYGNGNNSESSDNAQLKKEEHLNLAIHFHLLNDHDKCFWHTGMASSYEDYTATFIYGLYLRHGLACSPKTHVSFLFLLKTATQLLNKLVECLHSSDLGLNDTTPNEKLSTEYNQQRLLLALILYELGVCFMHGWGITRDRYLALHLIKLSGAWGDADAQFEAGLQMSLGAVSDKDSHMAAYYYRLAGFQGISPPSKCKWVYKSKYSLAANHKVPAASEVAYVSAIVENLESHSLKFSTKPKAKLRSLITSVRYL.

Residues 22–43 form a disordered region; it reads LNKKDGNDDDKAEHSKRSGYHG. A compositionally biased stretch (basic and acidic residues) spans 23–37; that stretch reads NKKDGNDDDKAEHSK. Ser-70 is modified (phosphoserine). 2 disordered regions span residues 80–104 and 182–324; these read TTSG…SSPF and YYHE…SSRQ. Residues 92 to 103 are compositionally biased toward low complexity; that stretch reads ESPASPAEASSP. Residues 191-203 are compositionally biased toward polar residues; it reads TASNTSPTPNSIK. Ser-196 carries the phosphoserine modification. A compositionally biased stretch (low complexity) spans 238–278; sequence SSGDSTPLSGSSSSKGMLMSMSTSENHSLSSNPELSNSNLL. Residues 296–306 are compositionally biased toward basic and acidic residues; that stretch reads SSKEPDKEHST. Sel1-like repeat units follow at residues 547-582 and 583-618; these read ALIL…AWGD and ADAQ…FQGI.

It is found in the cytoplasm. Functionally, functions as a negative regulator of mitosis. It interacts with the C-terminal of nim1, thereby inhibiting its kinase activity which phosphorylates wee1. In Schizosaccharomyces pombe (strain 972 / ATCC 24843) (Fission yeast), this protein is Mitosis inhibitor nif1 (nif1).